The chain runs to 527 residues: Glucose-6-phosphate isomerase (527 aa).

Glu323 (proton donor) is an active-site residue. Residues His352 and Lys454 contribute to the active site.

The protein belongs to the GPI family.

It is found in the cytoplasm. The enzyme catalyses alpha-D-glucose 6-phosphate = beta-D-fructose 6-phosphate. Its pathway is carbohydrate biosynthesis; gluconeogenesis. It functions in the pathway carbohydrate degradation; glycolysis; D-glyceraldehyde 3-phosphate and glycerone phosphate from D-glucose: step 2/4. In terms of biological role, catalyzes the reversible isomerization of glucose-6-phosphate to fructose-6-phosphate. The protein is Glucose-6-phosphate isomerase of Prochlorococcus marinus (strain MIT 9215).